Consider the following 129-residue polypeptide: Transcriptional activator protein (129 aa).

Low complexity predominate over residues 1–12 (MRSSSPSQPPSI). The segment at 1 to 23 (MRSSSPSQPPSIKKAHRQAKKRA) is disordered. A compositionally biased stretch (basic residues) spans 13 to 23 (KKAHRQAKKRA). Positions 13-28 (KKAHRQAKKRAIRRRR) match the Nuclear localization signal motif. Residues 33–50 (CGCSIYFHIDCAGHGFTH) fold into a zinc finger. The segment at 73 to 117 (LFQDKPSRGHAIHQDQDIQRPNPVQPQPQESIGSPQSIPELPSLD) is disordered. Residues 99 to 109 (QPQESIGSPQS) are compositionally biased toward polar residues. The interval 115–129 (SLDDIDDSFWVELFS) is transactivation.

This sequence belongs to the geminiviridae transcriptional activator protein family. In terms of assembly, monomer. Homodimer. Homooligomer. Self-interaction correlates with nuclear localization and efficient activation of transcription. Monomers suppress local silencing by interacting with and inactivating host adenosine kinase 2 (ADK2) in the cytoplasm. Interacts with and inhibits host SNF1 kinase. Binds to ssDNA. Phosphorylated.

The protein localises to the host nucleus. The protein resides in the host cytoplasm. Its function is as follows. Strong activator of the late viral genes promoters. Enhances the expression of the capsid protein and nuclear shuttle protein. Acts as a suppressor of RNA-mediated gene silencing, also known as post-transcriptional gene silencing (PTGS), a mechanism of plant viral defense that limits the accumulation of viral RNAs. Suppresses the host RNA silencing by inhibiting adenosine kinase 2 (ADK2), a kinase involved in a general methylation pathway. Also suppresses the host basal defense by interacting with and inhibiting SNF1 kinase, a key regulator of cell metabolism implicated in innate antiviral defense. Determines pathogenicity. This chain is Transcriptional activator protein, found in Solanum tuberosum (Potato).